A 564-amino-acid polypeptide reads, in one-letter code: Dihydroxy-acid dehydratase (564 aa).

Cys51 is a [2Fe-2S] cluster binding site. Asp83 lines the Mg(2+) pocket. [2Fe-2S] cluster is bound at residue Cys124. 2 residues coordinate Mg(2+): Asp125 and Lys126. Lys126 bears the N6-carboxylysine mark. Cys196 contributes to the [2Fe-2S] cluster binding site. Glu448 is a Mg(2+) binding site. The Proton acceptor role is filled by Ser474.

It belongs to the IlvD/Edd family. Homodimer. [2Fe-2S] cluster serves as cofactor. It depends on Mg(2+) as a cofactor.

The catalysed reaction is (2R)-2,3-dihydroxy-3-methylbutanoate = 3-methyl-2-oxobutanoate + H2O. It carries out the reaction (2R,3R)-2,3-dihydroxy-3-methylpentanoate = (S)-3-methyl-2-oxopentanoate + H2O. Its pathway is amino-acid biosynthesis; L-isoleucine biosynthesis; L-isoleucine from 2-oxobutanoate: step 3/4. It participates in amino-acid biosynthesis; L-valine biosynthesis; L-valine from pyruvate: step 3/4. Its function is as follows. Functions in the biosynthesis of branched-chain amino acids. Catalyzes the dehydration of (2R,3R)-2,3-dihydroxy-3-methylpentanoate (2,3-dihydroxy-3-methylvalerate) into 2-oxo-3-methylpentanoate (2-oxo-3-methylvalerate) and of (2R)-2,3-dihydroxy-3-methylbutanoate (2,3-dihydroxyisovalerate) into 2-oxo-3-methylbutanoate (2-oxoisovalerate), the penultimate precursor to L-isoleucine and L-valine, respectively. This Pyrobaculum calidifontis (strain DSM 21063 / JCM 11548 / VA1) protein is Dihydroxy-acid dehydratase.